The primary structure comprises 142 residues: Large ribosomal subunit protein uL11 (142 aa).

The protein belongs to the universal ribosomal protein uL11 family. Part of the ribosomal stalk of the 50S ribosomal subunit. Interacts with L10 and the large rRNA to form the base of the stalk. L10 forms an elongated spine to which L12 dimers bind in a sequential fashion forming a multimeric L10(L12)X complex. Post-translationally, one or more lysine residues are methylated.

Forms part of the ribosomal stalk which helps the ribosome interact with GTP-bound translation factors. This Xanthomonas campestris pv. campestris (strain 8004) protein is Large ribosomal subunit protein uL11.